The sequence spans 3146 residues: Bassianolide nonribosomal cyclodepsipeptide synthetase (3146 aa).

Over residues 1–12 (MEPPNNANTGQL) the composition is skewed to polar residues. Residues 1-23 (MEPPNNANTGQLGPTLPNGTVDL) form a disordered region. Positions 69–454 (HVVYEIPEDV…INKLQSTDGS (386 aa)) are condensation 1. An adenylation 1 region spans residues 495–887 (GDTPNKPAVC…GRMDSQVKIR (393 aa)). In terms of domain architecture, Carrier 1 spans 1015–1091 (PDASAGVTKL…SLQAAIGGSS (77 aa)). S1052 bears the O-(pantetheine 4'-phosphoryl)serine mark. The tract at residues 1109 to 1538 (SYSQGRLWFL…QTLISVVPLT (430 aa)) is condensation 2. Positions 1567 to 1973 (FRTQVASYPD…GRMDFQFKIR (407 aa)) are adenylation 2. The interval 2041–2181 (TYTELDTVSS…FPTRDYLERV (141 aa)) is S-adenosyl-L-methionine-dependent N-methyltransferase (MT). Carrier domains lie at 2514–2588 (FPLS…RQQL) and 2614–2688 (APTT…EVSQ). 2 positions are modified to O-(pantetheine 4'-phosphoryl)serine: S2548 and S2648. The interval 2734–3138 (QDVYLATHLQ…THLMEQVCNT (405 aa)) is condensation 3.

The protein belongs to the NRP synthetase family.

The enzyme catalyses 4 (R)-2-hydroxy-3-methylbutanoate + 4 L-leucine + 4 S-adenosyl-L-methionine + 8 ATP = bassianolide + 8 AMP + 4 S-adenosyl-L-homocysteine + 8 diphosphate + 8 H(+). Bassianolide nonribosomal synthetase that mediates the biosynthesis of bassianolide (BSL), a non-ribosomal cyclodepsipeptide that shows insecticidal and cancer cell antiproliferative activity. BSLS first catalyzes the iterative synthesis of an enzyme-bound dipeptidol monomer intermediate from D-2-hydroxyisovalerate and L-leucine before performing the condensation and cyclization of 4 dipeptidol monomers to yield the cyclic tetrameric ester bassianolide. The N-methyltransferase MT domain is responsible for the methylation of the leucine residues of bassianolide. BSLS is flexible with both the amino acid and hydroxyl acid precursors, and produces bassianolide as the major product (containing N-methyl-L-Leu), together with small amounts of beauvericin and its analogs beauvericins A-C (containing N-methyl-L-Phe). This is Bassianolide nonribosomal cyclodepsipeptide synthetase from Beauveria bassiana (White muscardine disease fungus).